The sequence spans 325 residues: Mitochondrial citrate transporter C (325 aa).

Solcar repeat units lie at residues 15–105, 117–208, and 221–310; these read ASPA…YKQM, KATF…LKAF, and LPSY…LKGK. 6 helical membrane passes run 21-41, 82-102, 121-141, 187-207, 221-241, and 282-303; these read LIAG…LDTI, GAVL…YESY, LAGL…MEVV, TALR…ELKA, LPSY…PFSN, and FYKG…TFTV.

Belongs to the mitochondrial carrier (TC 2.A.29) family.

It localises to the mitochondrion inner membrane. In terms of biological role, mitochondrial transporter that does not mediate citrate export from mitochondria to cytoplasm. Its exact function has still to be determined. This chain is Mitochondrial citrate transporter C, found in Aspergillus niger (strain ATCC 1015 / CBS 113.46 / FGSC A1144 / LSHB Ac4 / NCTC 3858a / NRRL 328 / USDA 3528.7).